A 63-amino-acid chain; its full sequence is Large ribosomal subunit protein uL30 (63 aa).

The protein belongs to the universal ribosomal protein uL30 family. In terms of assembly, part of the 50S ribosomal subunit.

The polypeptide is Large ribosomal subunit protein uL30 (Geobacillus stearothermophilus (Bacillus stearothermophilus)).